A 277-amino-acid chain; its full sequence is Bis(5'-nucleosyl)-tetraphosphatase, symmetrical (277 aa).

Belongs to the Ap4A hydrolase family.

The catalysed reaction is P(1),P(4)-bis(5'-adenosyl) tetraphosphate + H2O = 2 ADP + 2 H(+). Functionally, hydrolyzes diadenosine 5',5'''-P1,P4-tetraphosphate to yield ADP. The chain is Bis(5'-nucleosyl)-tetraphosphatase, symmetrical from Bordetella bronchiseptica (strain ATCC BAA-588 / NCTC 13252 / RB50) (Alcaligenes bronchisepticus).